A 299-amino-acid chain; its full sequence is ATP phosphoribosyltransferase (299 aa).

The protein belongs to the ATP phosphoribosyltransferase family. Long subfamily. As to quaternary structure, equilibrium between an active dimeric form, an inactive hexameric form and higher aggregates. Interconversion between the various forms is largely reversible and is influenced by the natural substrates and inhibitors of the enzyme. Mg(2+) is required as a cofactor.

It localises to the cytoplasm. The catalysed reaction is 1-(5-phospho-beta-D-ribosyl)-ATP + diphosphate = 5-phospho-alpha-D-ribose 1-diphosphate + ATP. It functions in the pathway amino-acid biosynthesis; L-histidine biosynthesis; L-histidine from 5-phospho-alpha-D-ribose 1-diphosphate: step 1/9. Its activity is regulated as follows. Feedback inhibited by histidine. Its function is as follows. Catalyzes the condensation of ATP and 5-phosphoribose 1-diphosphate to form N'-(5'-phosphoribosyl)-ATP (PR-ATP). Has a crucial role in the pathway because the rate of histidine biosynthesis seems to be controlled primarily by regulation of HisG enzymatic activity. In Salmonella choleraesuis (strain SC-B67), this protein is ATP phosphoribosyltransferase.